A 283-amino-acid polypeptide reads, in one-letter code: Bis(5'-nucleosyl)-tetraphosphatase, symmetrical (283 aa).

It belongs to the Ap4A hydrolase family.

The catalysed reaction is P(1),P(4)-bis(5'-adenosyl) tetraphosphate + H2O = 2 ADP + 2 H(+). Hydrolyzes diadenosine 5',5'''-P1,P4-tetraphosphate to yield ADP. This is Bis(5'-nucleosyl)-tetraphosphatase, symmetrical from Pseudomonas aeruginosa (strain LESB58).